We begin with the raw amino-acid sequence, 445 residues long: rRNA methyltransferase 3B, mitochondrial (445 aa).

The N-terminal 37 residues, 1–37 (MATRIASMRFRCALFQSALTLGRNEVNIKRYVRRRRA), are a transit peptide targeting the mitochondrion. Disordered regions lie at residues 52 to 90 (EGVI…SQPV) and 311 to 334 (HSTT…SDYG). Composition is skewed to polar residues over residues 54 to 70 (VISQ…NDIT), 78 to 90 (IENP…SQPV), and 311 to 324 (HSTT…NTTP). S-adenosyl-L-methionine is bound by residues glycine 387, isoleucine 411, and leucine 420.

Belongs to the class IV-like SAM-binding methyltransferase superfamily. RNA methyltransferase TrmH family.

It is found in the mitochondrion. The enzyme catalyses a uridine in rRNA + S-adenosyl-L-methionine = a 2'-O-methyluridine in rRNA + S-adenosyl-L-homocysteine + H(+). Its function is as follows. S-adenosyl-L-methionine-dependent 2'-O-ribose methyltransferase that catalyzes the formation of 2'-O-methylguanosine at position 1485 (Gm1485) in the mitochondrial large subunit ribosomal RNA (mtLSU rRNA), a conserved modification in the peptidyl transferase domain of the mtLSU rRNA. Also required for formation of 2'-O-methyluridine at position 1484 (Um1484) mediated by MRM2. This Danio rerio (Zebrafish) protein is rRNA methyltransferase 3B, mitochondrial.